The primary structure comprises 102 residues: Small ribosomal subunit protein uS10 (102 aa).

It belongs to the universal ribosomal protein uS10 family. As to quaternary structure, part of the 30S ribosomal subunit.

Functionally, involved in the binding of tRNA to the ribosomes. The polypeptide is Small ribosomal subunit protein uS10 (Thermococcus kodakarensis (strain ATCC BAA-918 / JCM 12380 / KOD1) (Pyrococcus kodakaraensis (strain KOD1))).